Reading from the N-terminus, the 158-residue chain is MQGRLSAWLVKHGLIHRSLGFDYQGIETLQIKPEDWHSIAVILYIYGYNYLRSQCAYDVAPGGLLASVYHLTRIEYGVDQPEEVCIKVFSPRKNPRIPSVFWVWKGVDFQERESFDMLGISYDNHPRLKRILMPESWIGWPLRKDYIAPNFYEIQDAH.

The protein belongs to the complex I 30 kDa subunit family. In terms of assembly, NDH is composed of at least 16 different subunits, 5 of which are encoded in the nucleus.

Its subcellular location is the plastid. The protein resides in the chloroplast thylakoid membrane. It catalyses the reaction a plastoquinone + NADH + (n+1) H(+)(in) = a plastoquinol + NAD(+) + n H(+)(out). The catalysed reaction is a plastoquinone + NADPH + (n+1) H(+)(in) = a plastoquinol + NADP(+) + n H(+)(out). NDH shuttles electrons from NAD(P)H:plastoquinone, via FMN and iron-sulfur (Fe-S) centers, to quinones in the photosynthetic chain and possibly in a chloroplast respiratory chain. The immediate electron acceptor for the enzyme in this species is believed to be plastoquinone. Couples the redox reaction to proton translocation, and thus conserves the redox energy in a proton gradient. The polypeptide is NAD(P)H-quinone oxidoreductase subunit J, chloroplastic (Daucus carota (Wild carrot)).